The sequence spans 168 residues: Lipoprotein signal peptidase (168 aa).

Transmembrane regions (helical) follow at residues 8–28, 70–90, and 104–124; these read TLLV…VVLL, KYFL…YLFF, and VLLC…GHIV. Active-site residues include aspartate 125 and aspartate 143. A helical membrane pass occupies residues 134–154; it reads WAFPTFNVADVLISLGTLLLV.

This sequence belongs to the peptidase A8 family.

The protein resides in the cell inner membrane. The catalysed reaction is Release of signal peptides from bacterial membrane prolipoproteins. Hydrolyzes -Xaa-Yaa-Zaa-|-(S,diacylglyceryl)Cys-, in which Xaa is hydrophobic (preferably Leu), and Yaa (Ala or Ser) and Zaa (Gly or Ala) have small, neutral side chains.. It functions in the pathway protein modification; lipoprotein biosynthesis (signal peptide cleavage). This protein specifically catalyzes the removal of signal peptides from prolipoproteins. The protein is Lipoprotein signal peptidase of Chlamydia pneumoniae (Chlamydophila pneumoniae).